We begin with the raw amino-acid sequence, 1244 residues long: Ras-specific guanine nucleotide-releasing factor 2 (1244 aa).

Positions glutamate 22–tyrosine 129 constitute a PH 1 domain. Residues valine 147–arginine 189 are a coiled coil. Positions aspartate 201 to cysteine 230 constitute an IQ domain. The DH domain occupies lysine 239 to glutamate 425. The PH 2 domain occupies proline 466 to aspartate 584. One can recognise an N-terminal Ras-GEF domain in the interval lysine 631–asparagine 745. Disordered stretches follow at residues asparagine 704 to serine 743, threonine 759 to valine 814, and proline 843 to serine 879. Basic and acidic residues predominate over residues serine 706 to proline 715. A compositionally biased stretch (polar residues) spans serine 728–serine 743. Composition is skewed to low complexity over residues threonine 759–threonine 774 and asparagine 781–glycine 806. The region spanning serine 1009–arginine 1241 is the Ras-GEF domain.

It localises to the cytoplasm. Its subcellular location is the cell membrane. The protein localises to the endoplasmic reticulum membrane. Functions as a calcium-regulated nucleotide exchange factor activating both Ras and rac1 through the exchange of bound GDP for GTP. May function in synaptic plasticity. The sequence is that of Ras-specific guanine nucleotide-releasing factor 2 (rasgrf2) from Danio rerio (Zebrafish).